The chain runs to 336 residues: Biotin synthase (336 aa).

A Radical SAM core domain is found at 54–281 (NAIQLSTLLS…KAMVRLSAGR (228 aa)). [4Fe-4S] cluster contacts are provided by Cys69, Cys73, and Cys76. 4 residues coordinate [2Fe-2S] cluster: Cys113, Cys144, Cys204, and Arg276.

The protein belongs to the radical SAM superfamily. Biotin synthase family. In terms of assembly, homodimer. The cofactor is [4Fe-4S] cluster. [2Fe-2S] cluster is required as a cofactor.

The enzyme catalyses (4R,5S)-dethiobiotin + (sulfur carrier)-SH + 2 reduced [2Fe-2S]-[ferredoxin] + 2 S-adenosyl-L-methionine = (sulfur carrier)-H + biotin + 2 5'-deoxyadenosine + 2 L-methionine + 2 oxidized [2Fe-2S]-[ferredoxin]. Its pathway is cofactor biosynthesis; biotin biosynthesis; biotin from 7,8-diaminononanoate: step 2/2. Its function is as follows. Catalyzes the conversion of dethiobiotin (DTB) to biotin by the insertion of a sulfur atom into dethiobiotin via a radical-based mechanism. In Burkholderia pseudomallei (strain 1710b), this protein is Biotin synthase.